Reading from the N-terminus, the 150-residue chain is Ribonuclease K6 (150 aa).

The signal sequence occupies residues 1–23 (MVLCFPLLLLLLVLWGQVCPLHA). Histidine 38 acts as the Proton acceptor in catalysis. 4 disulfides stabilise this stretch: cysteine 46-cysteine 104, cysteine 60-cysteine 114, cysteine 78-cysteine 129, and cysteine 85-cysteine 92. Residue asparagine 55 is glycosylated (N-linked (GlcNAc...) asparagine). Substrate contacts are provided by residues 61–65 (KPQNT) and lysine 86. N-linked (GlcNAc...) asparagine glycosylation is present at asparagine 100. Arginine 105 provides a ligand contact to substrate. Histidine 145 serves as the catalytic Proton donor.

The protein belongs to the pancreatic ribonuclease family. In terms of assembly, interacts (via N-terminus) with bacterial lipopolysaccharide (LPS).

Its subcellular location is the secreted. The protein localises to the lysosome. The protein resides in the cytoplasmic granule. Its function is as follows. Ribonuclease which shows a preference for the pyrimidines uridine and cytosine. Has potent antibacterial activity against a range of Gram-positive and Gram-negative bacteria, including P.aeruginosa, A.baumanii, M.luteus, S.aureus, E.faecalis, E.faecium, S.saprophyticus and E.coli. Causes loss of bacterial membrane integrity, and also promotes agglutination of Gram-negative bacteria. Probably contributes to urinary tract sterility. Bactericidal activity is independent of RNase activity. The protein is Ribonuclease K6 (RNASE6) of Saimiri sciureus (Common squirrel monkey).